The following is a 486-amino-acid chain: Cobyric acid synthase (486 aa).

In terms of domain architecture, GATase cobBQ-type spans 248–435 (VLNVVVPVLP…LHGLFESPAA (188 aa)). Catalysis depends on Cys329, which acts as the Nucleophile. His427 is an active-site residue.

This sequence belongs to the CobB/CobQ family. CobQ subfamily.

It functions in the pathway cofactor biosynthesis; adenosylcobalamin biosynthesis. Its function is as follows. Catalyzes amidations at positions B, D, E, and G on adenosylcobyrinic A,C-diamide. NH(2) groups are provided by glutamine, and one molecule of ATP is hydrogenolyzed for each amidation. The chain is Cobyric acid synthase from Pseudomonas syringae pv. syringae (strain B728a).